Here is a 353-residue protein sequence, read N- to C-terminus: Outer membrane protein P5 (353 aa).

Positions 1 to 21 are cleaved as a signal peptide; the sequence is MKKTAIALVVAGLAAASVAQA. A run of 8 beta stranded transmembrane segments spans residues 27–37, 58–69, 77–85, 104–115, 120–128, 158–167, 172–179, and 205–213; these read TFYAGVKAGQA, SFTYGVFGGYQI, LAVELGYDD, HGAHLSLKGSYE, LDVYGKAGV, GLFAVGAEYA, LAVRLEYQ, and SINAGISYR. Positions 227-353 constitute an OmpA-like domain; sequence VVSKTFSLNS…RVEIAVNGTK (127 aa). Residues C326 and C338 are joined by a disulfide bond.

This sequence belongs to the outer membrane OOP (TC 1.B.6) superfamily. OmpA family. As to quaternary structure, monomer and homodimer.

The protein resides in the cell outer membrane. In terms of biological role, with TolR probably plays a role in maintaining the position of the peptidoglycan cell wall in the periplasm. Acts as a porin with low permeability that allows slow penetration of small solutes; an internal gate slows down solute passage. This chain is Outer membrane protein P5, found in Haemophilus influenzae.